Here is a 193-residue protein sequence, read N- to C-terminus: dCTP deaminase (193 aa).

Residues Arg110–Arg115, Asp128, Val136–Glu138, Tyr171, Lys178, and Gln182 contribute to the dCTP site. Glu138 serves as the catalytic Proton donor/acceptor. Positions Arg174–Asp193 are disordered.

Belongs to the dCTP deaminase family. In terms of assembly, homotrimer.

The catalysed reaction is dCTP + H2O + H(+) = dUTP + NH4(+). It participates in pyrimidine metabolism; dUMP biosynthesis; dUMP from dCTP (dUTP route): step 1/2. Its function is as follows. Catalyzes the deamination of dCTP to dUTP. In Shewanella baltica (strain OS223), this protein is dCTP deaminase.